Consider the following 402-residue polypeptide: CinA-like protein (402 aa).

The protein belongs to the CinA family.

The polypeptide is CinA-like protein (Escherichia coli O17:K52:H18 (strain UMN026 / ExPEC)).